The sequence spans 468 residues: Siroheme synthase (468 aa).

Positions 1-203 (MQYLPIFLNI…GQEEEAEGAL (203 aa)) are precorrin-2 dehydrogenase /sirohydrochlorin ferrochelatase. Residues 22–23 (TV) and 43–44 (PK) contribute to the NAD(+) site. Serine 128 carries the post-translational modification Phosphoserine. The segment at 216–468 (GEVYLVGAGP…VPDREPLDAR (253 aa)) is uroporphyrinogen-III C-methyltransferase. An S-adenosyl-L-methionine-binding site is contributed by proline 225. Aspartate 248 (proton acceptor) is an active-site residue. The Proton donor role is filled by lysine 270. Residues 301-303 (GGD), isoleucine 306, 331-332 (TA), methionine 383, and glycine 412 contribute to the S-adenosyl-L-methionine site.

The protein in the N-terminal section; belongs to the precorrin-2 dehydrogenase / sirohydrochlorin ferrochelatase family. It in the C-terminal section; belongs to the precorrin methyltransferase family.

The enzyme catalyses uroporphyrinogen III + 2 S-adenosyl-L-methionine = precorrin-2 + 2 S-adenosyl-L-homocysteine + H(+). The catalysed reaction is precorrin-2 + NAD(+) = sirohydrochlorin + NADH + 2 H(+). It carries out the reaction siroheme + 2 H(+) = sirohydrochlorin + Fe(2+). It functions in the pathway cofactor biosynthesis; adenosylcobalamin biosynthesis; precorrin-2 from uroporphyrinogen III: step 1/1. The protein operates within cofactor biosynthesis; adenosylcobalamin biosynthesis; sirohydrochlorin from precorrin-2: step 1/1. It participates in porphyrin-containing compound metabolism; siroheme biosynthesis; precorrin-2 from uroporphyrinogen III: step 1/1. Its pathway is porphyrin-containing compound metabolism; siroheme biosynthesis; siroheme from sirohydrochlorin: step 1/1. It functions in the pathway porphyrin-containing compound metabolism; siroheme biosynthesis; sirohydrochlorin from precorrin-2: step 1/1. Its function is as follows. Multifunctional enzyme that catalyzes the SAM-dependent methylations of uroporphyrinogen III at position C-2 and C-7 to form precorrin-2 via precorrin-1. Then it catalyzes the NAD-dependent ring dehydrogenation of precorrin-2 to yield sirohydrochlorin. Finally, it catalyzes the ferrochelation of sirohydrochlorin to yield siroheme. The sequence is that of Siroheme synthase from Nitrosococcus oceani (strain ATCC 19707 / BCRC 17464 / JCM 30415 / NCIMB 11848 / C-107).